Consider the following 255-residue polypeptide: Pyridoxine 5'-phosphate synthase (255 aa).

Residue Asn-6 participates in 3-amino-2-oxopropyl phosphate binding. 1-deoxy-D-xylulose 5-phosphate is bound at residue 8 to 9 (DH). Residue Arg-17 participates in 3-amino-2-oxopropyl phosphate binding. His-41 (proton acceptor) is an active-site residue. Arg-43 and His-48 together coordinate 1-deoxy-D-xylulose 5-phosphate. The active-site Proton acceptor is Glu-68. Thr-96 is a binding site for 1-deoxy-D-xylulose 5-phosphate. His-208 serves as the catalytic Proton donor. Residues Gly-209 and 230-231 (GQ) contribute to the 3-amino-2-oxopropyl phosphate site.

This sequence belongs to the PNP synthase family. In terms of assembly, homooctamer; tetramer of dimers.

The protein localises to the cytoplasm. It catalyses the reaction 3-amino-2-oxopropyl phosphate + 1-deoxy-D-xylulose 5-phosphate = pyridoxine 5'-phosphate + phosphate + 2 H2O + H(+). Its pathway is cofactor biosynthesis; pyridoxine 5'-phosphate biosynthesis; pyridoxine 5'-phosphate from D-erythrose 4-phosphate: step 5/5. Its function is as follows. Catalyzes the complicated ring closure reaction between the two acyclic compounds 1-deoxy-D-xylulose-5-phosphate (DXP) and 3-amino-2-oxopropyl phosphate (1-amino-acetone-3-phosphate or AAP) to form pyridoxine 5'-phosphate (PNP) and inorganic phosphate. The chain is Pyridoxine 5'-phosphate synthase from Campylobacter lari (strain RM2100 / D67 / ATCC BAA-1060).